Reading from the N-terminus, the 207-residue chain is Proteasome subunit beta 2 (207 aa).

Residues 1–13 (METNNKLKILKTG) constitute a propeptide, removed in mature form; by autocatalysis. Catalysis depends on Thr14, which acts as the Nucleophile.

It belongs to the peptidase T1B family. The 20S proteasome core is composed of 14 alpha and 14 beta subunits that assemble into four stacked heptameric rings, resulting in a barrel-shaped structure. The two inner rings, each composed of seven catalytic beta subunits, are sandwiched by two outer rings, each composed of seven alpha subunits. The catalytic chamber with the active sites is on the inside of the barrel. Has a gated structure, the ends of the cylinder being occluded by the N-termini of the alpha-subunits. Is capped at one or both ends by the proteasome regulatory ATPase, PAN.

Its subcellular location is the cytoplasm. It carries out the reaction Cleavage of peptide bonds with very broad specificity.. Its activity is regulated as follows. The formation of the proteasomal ATPase PAN-20S proteasome complex, via the docking of the C-termini of PAN into the intersubunit pockets in the alpha-rings, triggers opening of the gate for substrate entry. Interconversion between the open-gate and close-gate conformations leads to a dynamic regulation of the 20S proteasome proteolysis activity. In terms of biological role, component of the proteasome core, a large protease complex with broad specificity involved in protein degradation. The protein is Proteasome subunit beta 2 of Sulfurisphaera tokodaii (strain DSM 16993 / JCM 10545 / NBRC 100140 / 7) (Sulfolobus tokodaii).